A 105-amino-acid polypeptide reads, in one-letter code: Phosphoribosyl-AMP cyclohydrolase (105 aa).

D72 lines the Mg(2+) pocket. A Zn(2+)-binding site is contributed by C73. Mg(2+) is bound by residues D74 and D76. 2 residues coordinate Zn(2+): C89 and C96.

It belongs to the PRA-CH family. Homodimer. It depends on Mg(2+) as a cofactor. The cofactor is Zn(2+).

Its subcellular location is the cytoplasm. The enzyme catalyses 1-(5-phospho-beta-D-ribosyl)-5'-AMP + H2O = 1-(5-phospho-beta-D-ribosyl)-5-[(5-phospho-beta-D-ribosylamino)methylideneamino]imidazole-4-carboxamide. It functions in the pathway amino-acid biosynthesis; L-histidine biosynthesis; L-histidine from 5-phospho-alpha-D-ribose 1-diphosphate: step 3/9. Catalyzes the hydrolysis of the adenine ring of phosphoribosyl-AMP. This Listeria monocytogenes serovar 1/2a (strain ATCC BAA-679 / EGD-e) protein is Phosphoribosyl-AMP cyclohydrolase.